The primary structure comprises 215 residues: Imidazole glycerol phosphate synthase subunit HisH (215 aa).

The Glutamine amidotransferase type-1 domain maps to 7 to 215 (TIAVIDYGMG…LLKNFVEWQP (209 aa)). Cys-86 functions as the Nucleophile in the catalytic mechanism. Residues His-195 and Glu-197 contribute to the active site.

Heterodimer of HisH and HisF.

Its subcellular location is the cytoplasm. It carries out the reaction 5-[(5-phospho-1-deoxy-D-ribulos-1-ylimino)methylamino]-1-(5-phospho-beta-D-ribosyl)imidazole-4-carboxamide + L-glutamine = D-erythro-1-(imidazol-4-yl)glycerol 3-phosphate + 5-amino-1-(5-phospho-beta-D-ribosyl)imidazole-4-carboxamide + L-glutamate + H(+). The enzyme catalyses L-glutamine + H2O = L-glutamate + NH4(+). Its pathway is amino-acid biosynthesis; L-histidine biosynthesis; L-histidine from 5-phospho-alpha-D-ribose 1-diphosphate: step 5/9. IGPS catalyzes the conversion of PRFAR and glutamine to IGP, AICAR and glutamate. The HisH subunit catalyzes the hydrolysis of glutamine to glutamate and ammonia as part of the synthesis of IGP and AICAR. The resulting ammonia molecule is channeled to the active site of HisF. This is Imidazole glycerol phosphate synthase subunit HisH from Dechloromonas aromatica (strain RCB).